The sequence spans 367 residues: Phosphoribosylaminoimidazole-succinocarboxamide synthase (367 aa).

The protein belongs to the SAICAR synthetase family.

It carries out the reaction 5-amino-1-(5-phospho-D-ribosyl)imidazole-4-carboxylate + L-aspartate + ATP = (2S)-2-[5-amino-1-(5-phospho-beta-D-ribosyl)imidazole-4-carboxamido]succinate + ADP + phosphate + 2 H(+). It functions in the pathway purine metabolism; IMP biosynthesis via de novo pathway; 5-amino-1-(5-phospho-D-ribosyl)imidazole-4-carboxamide from 5-amino-1-(5-phospho-D-ribosyl)imidazole-4-carboxylate: step 1/2. In Vibrio atlanticus (strain LGP32) (Vibrio splendidus (strain Mel32)), this protein is Phosphoribosylaminoimidazole-succinocarboxamide synthase.